A 139-amino-acid chain; its full sequence is Putative pre-16S rRNA nuclease (139 aa).

The protein belongs to the YqgF nuclease family.

The protein resides in the cytoplasm. Could be a nuclease involved in processing of the 5'-end of pre-16S rRNA. The protein is Putative pre-16S rRNA nuclease of Streptococcus gordonii (strain Challis / ATCC 35105 / BCRC 15272 / CH1 / DL1 / V288).